Reading from the N-terminus, the 454-residue chain is Carbamoyl phosphate synthase arginine-specific small chain (454 aa).

The transit peptide at 1-29 directs the protein to the mitochondrion; that stretch reads MMFSRFFKAVPARAPAFSSPLPVYQARTM. Residues 219-406 form the Glutamine amidotransferase type-1 domain; the sequence is HVAVLDCGVK…IDSVKKYKNS (188 aa). Cys-295 acts as the Nucleophile in catalysis. Residues His-379 and Glu-381 contribute to the active site.

The protein belongs to the CarA family. As to quaternary structure, heterodimer composed of 2 chains; the small (or glutamine) chain promotes the hydrolysis of glutamine to ammonia, which is used by the large (or ammonia) chain to synthesize carbamoyl phosphate.

Its subcellular location is the mitochondrion matrix. It carries out the reaction hydrogencarbonate + L-glutamine + 2 ATP + H2O = carbamoyl phosphate + L-glutamate + 2 ADP + phosphate + 2 H(+). It catalyses the reaction L-glutamine + H2O = L-glutamate + NH4(+). Its pathway is amino-acid biosynthesis; L-arginine biosynthesis; carbamoyl phosphate from bicarbonate: step 1/1. Its function is as follows. Small subunit of the arginine-specific carbamoyl phosphate synthase (CPSase). CPSase catalyzes the formation of carbamoyl phosphate from the ammonia moiety of glutamine, carbonate, and phosphate donated by ATP, the first step of the arginine biosynthetic pathway. The small subunit (glutamine amidotransferase) binds and cleaves glutamine to supply the large subunit with the substrate ammonia. This chain is Carbamoyl phosphate synthase arginine-specific small chain (cpa-1), found in Emericella nidulans (strain FGSC A4 / ATCC 38163 / CBS 112.46 / NRRL 194 / M139) (Aspergillus nidulans).